Consider the following 207-residue polypeptide: Octanoyltransferase (207 aa).

In terms of domain architecture, BPL/LPL catalytic spans 27-203 (ADTEDELWVV…HLETQFTPKA (177 aa)). Residues 66–73 (RGGQITYH), 133–135 (SLG), and 146–148 (GLA) each bind substrate. Catalysis depends on cysteine 164, which acts as the Acyl-thioester intermediate.

It belongs to the LipB family.

The protein resides in the cytoplasm. It carries out the reaction octanoyl-[ACP] + L-lysyl-[protein] = N(6)-octanoyl-L-lysyl-[protein] + holo-[ACP] + H(+). It functions in the pathway protein modification; protein lipoylation via endogenous pathway; protein N(6)-(lipoyl)lysine from octanoyl-[acyl-carrier-protein]: step 1/2. Its function is as follows. Catalyzes the transfer of endogenously produced octanoic acid from octanoyl-acyl-carrier-protein onto the lipoyl domains of lipoate-dependent enzymes. Lipoyl-ACP can also act as a substrate although octanoyl-ACP is likely to be the physiological substrate. The sequence is that of Octanoyltransferase from Neisseria meningitidis serogroup B (strain ATCC BAA-335 / MC58).